Consider the following 329-residue polypeptide: Diaminopimelate epimerase (329 aa).

Positions 14 and 73 each coordinate substrate. The active-site Proton donor is cysteine 82. Substrate-binding positions include 83-84 (GN), asparagine 170, asparagine 206, and 224-225 (ER). Cysteine 233 (proton acceptor) is an active-site residue. 234-235 (GT) serves as a coordination point for substrate.

Belongs to the diaminopimelate epimerase family. As to quaternary structure, homodimer.

Its subcellular location is the cytoplasm. It carries out the reaction (2S,6S)-2,6-diaminopimelate = meso-2,6-diaminopimelate. Its pathway is amino-acid biosynthesis; L-lysine biosynthesis via DAP pathway; DL-2,6-diaminopimelate from LL-2,6-diaminopimelate: step 1/1. Catalyzes the stereoinversion of LL-2,6-diaminopimelate (L,L-DAP) to meso-diaminopimelate (meso-DAP), a precursor of L-lysine and an essential component of the bacterial peptidoglycan. The polypeptide is Diaminopimelate epimerase (Listeria monocytogenes serovar 1/2a (strain ATCC BAA-679 / EGD-e)).